A 266-amino-acid chain; its full sequence is Glucosamine-6-phosphate deaminase (266 aa).

The active-site Proton acceptor; for enolization step is aspartate 72. The active-site For ring-opening step is aspartate 141. Histidine 143 acts as the Proton acceptor; for ring-opening step in catalysis. Glutamate 148 acts as the For ring-opening step in catalysis.

The protein belongs to the glucosamine/galactosamine-6-phosphate isomerase family. NagB subfamily. Homohexamer.

The catalysed reaction is alpha-D-glucosamine 6-phosphate + H2O = beta-D-fructose 6-phosphate + NH4(+). The protein operates within amino-sugar metabolism; N-acetylneuraminate degradation; D-fructose 6-phosphate from N-acetylneuraminate: step 5/5. With respect to regulation, allosterically activated by N-acetylglucosamine 6-phosphate (GlcNAc6P). Its function is as follows. Catalyzes the reversible isomerization-deamination of glucosamine 6-phosphate (GlcN6P) to form fructose 6-phosphate (Fru6P) and ammonium ion. The polypeptide is Glucosamine-6-phosphate deaminase (Salmonella arizonae (strain ATCC BAA-731 / CDC346-86 / RSK2980)).